The chain runs to 469 residues: 3-isopropylmalate dehydratase large subunit (469 aa).

Residues cysteine 350, cysteine 410, and cysteine 413 each contribute to the [4Fe-4S] cluster site.

It belongs to the aconitase/IPM isomerase family. LeuC type 1 subfamily. In terms of assembly, heterodimer of LeuC and LeuD. It depends on [4Fe-4S] cluster as a cofactor.

It carries out the reaction (2R,3S)-3-isopropylmalate = (2S)-2-isopropylmalate. It functions in the pathway amino-acid biosynthesis; L-leucine biosynthesis; L-leucine from 3-methyl-2-oxobutanoate: step 2/4. In terms of biological role, catalyzes the isomerization between 2-isopropylmalate and 3-isopropylmalate, via the formation of 2-isopropylmaleate. This Rhizobium meliloti (strain 1021) (Ensifer meliloti) protein is 3-isopropylmalate dehydratase large subunit.